The primary structure comprises 533 residues: Peptide chain release factor 3 (533 aa).

Positions 9–284 (ARRRTFAIIS…ALCELSPPPL (276 aa)) constitute a tr-type G domain. GTP is bound by residues 18–25 (SHPDAGKT), 95–99 (DTPGH), and 149–152 (NKLD).

It belongs to the TRAFAC class translation factor GTPase superfamily. Classic translation factor GTPase family. PrfC subfamily.

The protein localises to the cytoplasm. In terms of biological role, increases the formation of ribosomal termination complexes and stimulates activities of RF-1 and RF-2. It binds guanine nucleotides and has strong preference for UGA stop codons. It may interact directly with the ribosome. The stimulation of RF-1 and RF-2 is significantly reduced by GTP and GDP, but not by GMP. The protein is Peptide chain release factor 3 of Cupriavidus necator (strain ATCC 17699 / DSM 428 / KCTC 22496 / NCIMB 10442 / H16 / Stanier 337) (Ralstonia eutropha).